A 355-amino-acid chain; its full sequence is Fe-S cluster assembly protein DRE2 (355 aa).

The segment at 23–156 (TSFNPRTLLL…KPDYSASVAV (134 aa)) is N-terminal SAM-like domain. The segment at 157 to 247 (PLRLRRKDNS…EDTLLTEEDM (91 aa)) is linker. The interval 189-214 (RKSVDMTDDVPEKDVPKVDSPKNDAP) is disordered. A compositionally biased stretch (basic and acidic residues) spans 190–213 (KSVDMTDDVPEKDVPKVDSPKNDA). Residues Cys-257, Cys-268, Cys-271, and Cys-273 each coordinate [2Fe-2S] cluster. Positions 257-273 (CAPRAGKRRRACKDCTC) are fe-S binding site A. [4Fe-4S] cluster-binding residues include Cys-318, Cys-321, Cys-329, and Cys-332. 2 consecutive short sequence motifs (cx2C motif) follow at residues 318–321 (CGNC) and 329–332 (CDGC). Residues 318–332 (CGNCSLGDAFRCDGC) are fe-S binding site B.

Belongs to the anamorsin family. In terms of assembly, monomer. Interacts with TAH18. Interacts with MIA40. [2Fe-2S] cluster is required as a cofactor. It depends on [4Fe-4S] cluster as a cofactor.

The protein resides in the cytoplasm. It localises to the mitochondrion intermembrane space. In terms of biological role, component of the cytosolic iron-sulfur (Fe-S) protein assembly (CIA) machinery required for the maturation of extramitochondrial Fe-S proteins. Part of an electron transfer chain functioning in an early step of cytosolic Fe-S biogenesis, facilitating the de novo assembly of a [4Fe-4S] cluster on the scaffold complex CFD1-NBP35. Electrons are transferred to DRE2 from NADPH via the FAD- and FMN-containing protein TAH18. TAH18-DRE2 are also required for the assembly of the diferric tyrosyl radical cofactor of ribonucleotide reductase (RNR), probably by providing electrons for reduction during radical cofactor maturation in the catalytic small subunit RNR2. This chain is Fe-S cluster assembly protein DRE2, found in Botryotinia fuckeliana (strain B05.10) (Noble rot fungus).